Consider the following 168-residue polypeptide: Ribonuclease H (168 aa).

Residues 10–151 form the RNase H type-1 domain; it reads NNIPVKIYTD…ADKLATNGKI (142 aa). Residues Asp-19, Glu-57, Asp-79, and Asp-143 each coordinate Mg(2+).

It belongs to the RNase H family. In terms of assembly, monomer. The cofactor is Mg(2+).

The protein localises to the cytoplasm. The catalysed reaction is Endonucleolytic cleavage to 5'-phosphomonoester.. Functionally, endonuclease that specifically degrades the RNA of RNA-DNA hybrids. This is Ribonuclease H from Orientia tsutsugamushi (strain Boryong) (Rickettsia tsutsugamushi).